Here is a 164-residue protein sequence, read N- to C-terminus: Cyclic pyranopterin monophosphate synthase (164 aa).

Residues 75–77 (MCH) and 116–117 (ME) contribute to the substrate site. Residue aspartate 131 is part of the active site.

The protein belongs to the MoaC family. As to quaternary structure, homohexamer; trimer of dimers.

The enzyme catalyses (8S)-3',8-cyclo-7,8-dihydroguanosine 5'-triphosphate = cyclic pyranopterin phosphate + diphosphate. Its pathway is cofactor biosynthesis; molybdopterin biosynthesis. Functionally, catalyzes the conversion of (8S)-3',8-cyclo-7,8-dihydroguanosine 5'-triphosphate to cyclic pyranopterin monophosphate (cPMP). This is Cyclic pyranopterin monophosphate synthase from Staphylococcus aureus (strain Mu3 / ATCC 700698).